We begin with the raw amino-acid sequence, 119 residues long: Large ribosomal subunit protein uL18 (119 aa).

It belongs to the universal ribosomal protein uL18 family. In terms of assembly, part of the 50S ribosomal subunit; part of the 5S rRNA/L5/L18/L25 subcomplex. Contacts the 5S and 23S rRNAs.

Functionally, this is one of the proteins that bind and probably mediate the attachment of the 5S RNA into the large ribosomal subunit, where it forms part of the central protuberance. The sequence is that of Large ribosomal subunit protein uL18 from Clostridium botulinum (strain Langeland / NCTC 10281 / Type F).